A 292-amino-acid chain; its full sequence is 4-hydroxy-tetrahydrodipicolinate synthase (292 aa).

A pyruvate-binding site is contributed by threonine 45. The active-site Proton donor/acceptor is tyrosine 133. The Schiff-base intermediate with substrate role is filled by lysine 161. Residue isoleucine 203 coordinates pyruvate.

The protein belongs to the DapA family. As to quaternary structure, homotetramer; dimer of dimers.

It localises to the cytoplasm. The catalysed reaction is L-aspartate 4-semialdehyde + pyruvate = (2S,4S)-4-hydroxy-2,3,4,5-tetrahydrodipicolinate + H2O + H(+). It participates in amino-acid biosynthesis; L-lysine biosynthesis via DAP pathway; (S)-tetrahydrodipicolinate from L-aspartate: step 3/4. Its function is as follows. Catalyzes the condensation of (S)-aspartate-beta-semialdehyde [(S)-ASA] and pyruvate to 4-hydroxy-tetrahydrodipicolinate (HTPA). The chain is 4-hydroxy-tetrahydrodipicolinate synthase from Dechloromonas aromatica (strain RCB).